The following is a 1081-amino-acid chain: Psi-producing oxygenase A (1081 aa).

Residues 105 to 446 form a linoleate 8R-lipoxygenase region; sequence TKSFLNMLWN…DGAFNDDDLV (342 aa). His-202 contacts heme b. Tyr-374 is an active-site residue. His-377 provides a ligand contact to heme b. The tract at residues 654 to 1081 is 9,12-octadecadienoate 8-hydroperoxide 8R-isomerase; sequence IFISSHAACM…GELPQLKEDF (428 aa).

It belongs to the peroxidase family. As to quaternary structure, homotetramer. Heme b serves as cofactor.

The catalysed reaction is (9Z,12Z)-octadecadienoate + O2 = (8R,9Z,12Z)-8-hydroperoxyoctadeca-9,12-dienoate. It carries out the reaction (8R,9Z,12Z)-8-hydroperoxyoctadeca-9,12-dienoate = (5S,8R,9Z,12Z)-5,8-dihydroxyoctadeca-9,12-dienoate. Bifunctional heme-containing enzyme that oxidizes linoleic acid to (8R,9Z,12Z)-8-hydroperoxyoctadeca-9,12-dienoate (within the N-terminal heme peroxidase domain), which is subsequently isomerized to (5S,8R,9Z,12Z)-5,8-dihydroxyoctadeca-9,12-dienoate (within the C-terminal P450 heme thiolate domain). Oxidized unsaturated fatty acids, so-called oxylipins, derived from endogenous fatty acids, influence the development of the asexual conidiophores and sexual cleistothecia and regulate the secondary metabolism. These substances were collectively named psi factors and are primarily a mixture of hydroxylated oleic, linoleic and alpha-linolenic acids. They are termed psi-beta, psi-alpha, and psi-gamma, respectively. The protein is Psi-producing oxygenase A (ppoA) of Emericella nidulans (Aspergillus nidulans).